The sequence spans 204 residues: FMN-dependent NADH:quinone oxidoreductase 5 (204 aa).

Residue S10 coordinates FMN.

Belongs to the azoreductase type 1 family. As to quaternary structure, homodimer. FMN serves as cofactor.

The enzyme catalyses 2 a quinone + NADH + H(+) = 2 a 1,4-benzosemiquinone + NAD(+). The catalysed reaction is N,N-dimethyl-1,4-phenylenediamine + anthranilate + 2 NAD(+) = 2-(4-dimethylaminophenyl)diazenylbenzoate + 2 NADH + 2 H(+). Its function is as follows. Quinone reductase that provides resistance to thiol-specific stress caused by electrophilic quinones. In terms of biological role, also exhibits azoreductase activity. Catalyzes the reductive cleavage of the azo bond in aromatic azo compounds to the corresponding amines. This is FMN-dependent NADH:quinone oxidoreductase 5 from Burkholderia lata (strain ATCC 17760 / DSM 23089 / LMG 22485 / NCIMB 9086 / R18194 / 383).